A 73-amino-acid polypeptide reads, in one-letter code: U3-agatoxin-Ao1k (73 aa).

The first 20 residues, 1–20, serve as a signal peptide directing secretion; that stretch reads MRTIISLLLLSAMVFAVIEA. Positions 21 to 34 are excised as a propeptide; that stretch reads ISLEEGLQLFEGER. 4 cysteine pairs are disulfide-bonded: Cys-36–Cys-52, Cys-43–Cys-57, Cys-51–Cys-67, and Cys-59–Cys-65. Ser-71 carries the serine amide modification.

The protein belongs to the neurotoxin 07 (Beta/delta-agtx) family. 03 (aga-4) subfamily. Aga sub-subfamily. Expressed by the venom gland.

The protein resides in the secreted. Its function is as follows. Insecticidal neurotoxin that modulates the insect Nav channel (DmNaV1/tipE (para/tipE)) in a unique manner, with both the activation and inactivation processes being affected. The voltage dependence of activation is shifted toward more hyperpolarized potentials (analogous to site 4 toxins) and a non-inactivating persistent sodium current is induced (site 3-like action). Interestingly, both effects take place in a voltage-dependent manner, producing a bell-shaped curve between -80 and 0 mV. Compared to beta/delta-agatoxin-1 to -3, this toxin appears to affect the insect sodium channel only weakly. In Agelena orientalis (Funnel-web spider), this protein is U3-agatoxin-Ao1k.